The sequence spans 438 residues: Death-associated inhibitor of apoptosis 1 (438 aa).

One copy of the BIR 1 repeat lies at 44–110 (EETRLKTFTD…QRWSPNCPLL (67 aa)). The interval 194–213 (TATQATGDVQPETCRPSAAS) is disordered. A BIR 2 repeat occupies 226–293 (ETARLRTFEA…ALWLSQCRFV (68 aa)). The Zn(2+) site is built by Cys263, Cys266, His283, and Cys290. The disordered stretch occupies residues 322-346 (GGVAVASTQASEEEQQTSLSSEEAV). Over residues 327–345 (ASTQASEEEQQTSLSSEEA) the composition is skewed to low complexity. The RING-type zinc-finger motif lies at 391-426 (CKICYGAEYNTAFLPCGHVVACAKCASSVTKCPLCR).

This sequence belongs to the IAP family. In terms of assembly, interacts (via BIR 2 domain) with Dronc (via residues 114-125). Rpr, hid and grim can outcompete Dronc for binding Diap1 therefore removing Diap1-mediated ubiquitination. Interacts (via BIR 2 domain) with HtrA2; this displaces any bound Dronc. Interacts with Strica. The N-terminally cleaved form interacts with Ubr3 (via UBR-type zinc finger); the interaction promotes the recruitment and uniquitination of substrate capases such as Dronc. In terms of processing, ubiquitinated and degraded by HtrA2 in apoptotic cells; proteolytic cleavage at specific sites in the BIR domain linker region generating inactive fragments. Mutation of one site reduces but does not abolish cleavage as another site is selected by the protease.

The enzyme catalyses S-ubiquitinyl-[E2 ubiquitin-conjugating enzyme]-L-cysteine + [acceptor protein]-L-lysine = [E2 ubiquitin-conjugating enzyme]-L-cysteine + N(6)-ubiquitinyl-[acceptor protein]-L-lysine.. Functionally, anti-apoptotic protein which functions as a caspase regulator, using its E3 ubiquitin-protein ligase activity to smother caspase activity. Binds, ubiquitinates and inactivates initiator caspase Dronc, and effector caspases Drice and Dcp-1. Acts as a Nedd8-E3 ubiquitin-protein ligase for Drice. Suppresses apoptosis by targeting the apoptosome for ubiquitination and inactivation. Plays an important role in cell motility. Overexpression suppresses rpr and hid-dependent cell death in the eye. Interaction of Diap1 with Dronc is required to suppress Dronc-mediated cell death through Diap1-mediated ubiquitination of Dronc. Acts as a positive regulator of Wnt signaling. The protein is Death-associated inhibitor of apoptosis 1 (Diap1) of Drosophila melanogaster (Fruit fly).